Reading from the N-terminus, the 61-residue chain is Small ribosomal subunit protein uS14 (61 aa).

Zn(2+)-binding residues include C24, C27, C40, and C43.

This sequence belongs to the universal ribosomal protein uS14 family. Zinc-binding uS14 subfamily. As to quaternary structure, part of the 30S ribosomal subunit. Contacts proteins S3 and S10. Zn(2+) is required as a cofactor.

Binds 16S rRNA, required for the assembly of 30S particles and may also be responsible for determining the conformation of the 16S rRNA at the A site. This chain is Small ribosomal subunit protein uS14, found in Rubrobacter xylanophilus (strain DSM 9941 / JCM 11954 / NBRC 16129 / PRD-1).